The sequence spans 649 residues: Macrolide export ATP-binding/permease protein MacB (649 aa).

Positions 7–245 constitute an ABC transporter domain; it reads IELKNIVRRY…SSAQEVTPQL (239 aa). 43-50 contributes to the ATP binding site; that stretch reads GASGSGKS. Transmembrane regions (helical) follow at residues 276-296, 529-549, 582-602, and 612-632; these read LLTM…IALG, IAFI…LVSV, LLGG…FSAF, and FSSF…FGYF.

This sequence belongs to the ABC transporter superfamily. Macrolide exporter (TC 3.A.1.122) family. In terms of assembly, homodimer. Part of the tripartite efflux system MacAB-TolC, which is composed of an inner membrane transporter, MacB, a periplasmic membrane fusion protein, MacA, and an outer membrane component, TolC. The complex forms a large protein conduit and can translocate molecules across both the inner and outer membranes. Interacts with MacA.

The protein localises to the cell inner membrane. In terms of biological role, part of the tripartite efflux system MacAB-TolC. MacB is a non-canonical ABC transporter that contains transmembrane domains (TMD), which form a pore in the inner membrane, and an ATP-binding domain (NBD), which is responsible for energy generation. Confers resistance against macrolides. This chain is Macrolide export ATP-binding/permease protein MacB, found in Pasteurella multocida (strain Pm70).